Reading from the N-terminus, the 312-residue chain is Olfactory receptor 1D5 (312 aa).

Over 1-25 (MDGDNQSENSQFLLLGISESPEQQQ) the chain is Extracellular. Asn-5 carries N-linked (GlcNAc...) asparagine glycosylation. Residues 26 to 49 (ILFWMFLSMYLVTVLGNVLIILAI) form a helical membrane-spanning segment. Residues 50–57 (SSDSHLHT) lie on the Cytoplasmic side of the membrane. Residues 58-79 (PMYFFLANLSFTDLFFVTNTIP) traverse the membrane as a helical segment. Residues 80-100 (KMLVNFQSQNKAISYAGCLTQ) lie on the Extracellular side of the membrane. Cys-97 and Cys-189 form a disulfide bridge. A helical membrane pass occupies residues 101–120 (LYFLVSLVTLDNLILAVMAY). Topologically, residues 121-140 (DRYVAICCPLHYVTAMSPGL) are cytoplasmic. A helical membrane pass occupies residues 141-158 (CVLLLSLCWGLSVLYGLL). Residues 159–196 (LTLLLTRVTFCGPREIHYLFCDMYILLRLACSNTHIIH) are Extracellular-facing. The helical transmembrane segment at 197-220 (TVLVATGCFIFLTPLGFMTTSYVC) threads the bilayer. Topologically, residues 221-237 (IVRTILQIPSASKKYKA) are cytoplasmic. The helical transmembrane segment at 238-260 (FSTCASHLGVVSLFYGTLAMVYL) threads the bilayer. The Extracellular segment spans residues 261–271 (QPLHTYSMKDS). A helical membrane pass occupies residues 272–291 (VATVMYAVVTPMMNPFIYSL). Over 292–312 (RNKDMHGALGRVLRRLFQRPK) the chain is Cytoplasmic.

The protein belongs to the G-protein coupled receptor 1 family.

It is found in the cell membrane. Functionally, odorant receptor. This chain is Olfactory receptor 1D5 (OR1D5), found in Pan paniscus (Pygmy chimpanzee).